The following is a 223-amino-acid chain: Cytidylate kinase (223 aa).

ATP is bound at residue 10–18 (GPAGAGKST).

This sequence belongs to the cytidylate kinase family. Type 1 subfamily.

The protein resides in the cytoplasm. The enzyme catalyses CMP + ATP = CDP + ADP. It carries out the reaction dCMP + ATP = dCDP + ADP. The chain is Cytidylate kinase from Exiguobacterium sibiricum (strain DSM 17290 / CCUG 55495 / CIP 109462 / JCM 13490 / 255-15).